A 382-amino-acid polypeptide reads, in one-letter code: Palmitoyltransferase ZDHHC16B (382 aa).

The Cytoplasmic portion of the chain corresponds to 1-75; it reads MRSWRWSVSR…IYWLVDNMTR (75 aa). The helical transmembrane segment at 76–96 threads the bilayer; that stretch reads WFGVVFVCLVMALTSSVVVIV. The Lumenal portion of the chain corresponds to 97–107; the sequence is YLCVLPIIFSS. A helical membrane pass occupies residues 108–130; the sequence is YPVYWILWHLCYGHWNLLMVVFH. At 131-196 the chain is on the cytoplasmic side; it reads YYKATTTQPG…NNCVGHFNHR (66 aa). One can recognise a DHHC domain in the interval 153 to 203; sequence TICKKCIVPKPARTHHCSICNRCILKMDHHCPWLNNCVGHFNHRYFFSFCL. The active-site S-palmitoyl cysteine intermediate is the cysteine 183. A helical membrane pass occupies residues 197 to 217; sequence YFFSFCLFMTMGCVYCSISAK. The Lumenal segment spans residues 218–275; the sequence is DMFLDAYNAIESGRYKGGASQGEAVPGAGLIYISFQHQSSYQTPPPAFTHQERMVHKS. Residues 276–296 traverse the membrane as a helical segment; it reads LVYLWVLTSSVAVALGALTLW. Residues 297–382 are Cytoplasmic-facing; the sequence is HAILITRGET…PAYKSSTTAI (86 aa).

It belongs to the DHHC palmitoyltransferase family.

The protein localises to the endoplasmic reticulum membrane. It carries out the reaction L-cysteinyl-[protein] + hexadecanoyl-CoA = S-hexadecanoyl-L-cysteinyl-[protein] + CoA. Its function is as follows. Palmitoyl acyltransferase that mediates palmitoylation of proteins and is required during embryonic heart development. Involved in the proliferation of neural stem cells by regulating the FGF/ERK pathway. In Danio rerio (Zebrafish), this protein is Palmitoyltransferase ZDHHC16B.